Reading from the N-terminus, the 755-residue chain is PWWP domain-containing protein 2A (755 aa).

A compositionally biased stretch (low complexity) spans Met-1 to Pro-15. Residues Met-1–Val-153 are disordered. A compositionally biased stretch (pro residues) spans Asp-64–Gly-76. A phosphoserine mark is found at Ser-81, Ser-102, Ser-116, and Ser-119. The span at Glu-112–Ala-126 shows a compositional bias: pro residues. The tract at residues Gly-148–Gly-373 is interaction with HDAC1 and MTA1. Lys-208 participates in a covalent cross-link: Glycyl lysine isopeptide (Lys-Gly) (interchain with G-Cter in SUMO2). Disordered regions lie at residues Tyr-282–Met-301, Lys-334–Ala-384, Lys-400–Asn-562, and Ser-578–Glu-626. Basic residues predominate over residues Arg-292–Met-301. Composition is skewed to basic and acidic residues over residues Ser-346–Glu-356 and Asp-368–Lys-381. Polar residues predominate over residues Ala-403 to Lys-421. Over residues Asn-422 to Asn-444 the composition is skewed to basic and acidic residues. The tract at residues Met-423–Lys-574 is interaction with the H2A.Z/H2AZ1. Polar residues predominate over residues Ser-508 to Ser-527. Over residues Ser-593–Ser-603 the composition is skewed to low complexity. Positions Val-655–Asn-715 constitute a PWWP domain.

Component of a MTA1-specific subcomplex of the NuRD complex (M1HR), composed of PWWP2A, MTA1/2, HDAC1/2, and RBBP4/7 but does not contain CHD4 and MBD3. Interacts with MTA1; the interaction mediates the association of PWWP2A with the M1HR complex. Interacts with H2A.Z/H2AZ1. Interacts (via PWWP domain) with histone H3 trimethylated at 'Lys-36' (H3K36me3). Does not interact with CHD4 and MBD3. As to quaternary structure, interacts with MTA1 and with HDAC1 in a MTA1-dependent manner. Does not interact with CHD4 and MBD3.

Its subcellular location is the nucleus. Functionally, chromatin-binding protein that acts as an adapter between distinct nucleosome components (H3K36me3 or H2A.Z) and chromatin-modifying complexes, contributing to the regulation of the levels of histone acetylation at actively transcribed genes. Competes with CHD4 and MBD3 for interaction with MTA1 to form a NuRD subcomplex, preventing the formation of full NuRD complex (containing CHD4 and MBD3), leading to recruitment of HDACs to gene promoters resulting in turn in the deacetylation of nearby H3K27 and H2A.Z. Plays a role in facilitating transcriptional elongation and repression of spurious transcription initiation through regulation of histone acetylation. Essential for proper mitosis progression. The chain is PWWP domain-containing protein 2A (PWWP2A) from Homo sapiens (Human).